Here is a 70-residue protein sequence, read N- to C-terminus: Protein SlyX homolog (70 aa).

This sequence belongs to the SlyX family.

This is Protein SlyX homolog from Shewanella oneidensis (strain ATCC 700550 / JCM 31522 / CIP 106686 / LMG 19005 / NCIMB 14063 / MR-1).